We begin with the raw amino-acid sequence, 450 residues long: tRNA modification GTPase MnmE (450 aa).

(6S)-5-formyl-5,6,7,8-tetrahydrofolate is bound by residues Lys21, Glu78, and Lys117. In terms of domain architecture, TrmE-type G spans 213–376 (GHALSIIGKP…LSQKISAFFP (164 aa)). Position 223 (Asn223) interacts with K(+). GTP contacts are provided by residues 223-228 (NAGKSS), 242-248 (SDIKGTT), and 267-270 (DTAG). Ser227 provides a ligand contact to Mg(2+). Ser242, Ile244, and Thr247 together coordinate K(+). Thr248 is a Mg(2+) binding site. Lys450 lines the (6S)-5-formyl-5,6,7,8-tetrahydrofolate pocket.

Belongs to the TRAFAC class TrmE-Era-EngA-EngB-Septin-like GTPase superfamily. TrmE GTPase family. Homodimer. Heterotetramer of two MnmE and two MnmG subunits. It depends on K(+) as a cofactor.

The protein localises to the cytoplasm. Exhibits a very high intrinsic GTPase hydrolysis rate. Involved in the addition of a carboxymethylaminomethyl (cmnm) group at the wobble position (U34) of certain tRNAs, forming tRNA-cmnm(5)s(2)U34. The sequence is that of tRNA modification GTPase MnmE from Helicobacter acinonychis (strain Sheeba).